A 165-amino-acid chain; its full sequence is Xanthine-guanine phosphoribosyltransferase (165 aa).

5-phospho-alpha-D-ribose 1-diphosphate is bound by residues 41-42 and 98-106; these read RG and DDLTDTGKT. Residue aspartate 99 participates in Mg(2+) binding. Guanine-binding residues include aspartate 102 and isoleucine 145. The xanthine site is built by aspartate 102 and isoleucine 145. Residues 102-106 and 144-145 each bind GMP; these read DTGKT and WI.

Belongs to the purine/pyrimidine phosphoribosyltransferase family. XGPT subfamily. In terms of assembly, homotetramer. Mg(2+) is required as a cofactor.

It localises to the cell inner membrane. It carries out the reaction GMP + diphosphate = guanine + 5-phospho-alpha-D-ribose 1-diphosphate. It catalyses the reaction XMP + diphosphate = xanthine + 5-phospho-alpha-D-ribose 1-diphosphate. The enzyme catalyses IMP + diphosphate = hypoxanthine + 5-phospho-alpha-D-ribose 1-diphosphate. It participates in purine metabolism; GMP biosynthesis via salvage pathway; GMP from guanine: step 1/1. The protein operates within purine metabolism; XMP biosynthesis via salvage pathway; XMP from xanthine: step 1/1. Purine salvage pathway enzyme that catalyzes the transfer of the ribosyl-5-phosphate group from 5-phospho-alpha-D-ribose 1-diphosphate (PRPP) to the N9 position of the 6-oxopurines guanine and xanthine to form the corresponding ribonucleotides GMP (guanosine 5'-monophosphate) and XMP (xanthosine 5'-monophosphate), with the release of PPi. To a lesser extent, also acts on hypoxanthine. This Brucella canis (strain ATCC 23365 / NCTC 10854 / RM-666) protein is Xanthine-guanine phosphoribosyltransferase.